A 168-amino-acid polypeptide reads, in one-letter code: Ribosome maturation factor RimM (168 aa).

Positions 93–168 (EDEFYQSDLV…IVLNIPEFID (76 aa)) constitute a PRC barrel domain.

It belongs to the RimM family. Binds ribosomal protein uS19.

It localises to the cytoplasm. Its function is as follows. An accessory protein needed during the final step in the assembly of 30S ribosomal subunit, possibly for assembly of the head region. Essential for efficient processing of 16S rRNA. May be needed both before and after RbfA during the maturation of 16S rRNA. It has affinity for free ribosomal 30S subunits but not for 70S ribosomes. In Wolbachia pipientis wMel, this protein is Ribosome maturation factor RimM.